The primary structure comprises 485 residues: Probable glycine dehydrogenase (decarboxylating) subunit 2 (485 aa).

Position 273 is an N6-(pyridoxal phosphate)lysine (lysine 273).

Belongs to the GcvP family. C-terminal subunit subfamily. In terms of assembly, the glycine cleavage system is composed of four proteins: P, T, L and H. In this organism, the P 'protein' is a heterodimer of two subunits. Requires pyridoxal 5'-phosphate as cofactor.

It catalyses the reaction N(6)-[(R)-lipoyl]-L-lysyl-[glycine-cleavage complex H protein] + glycine + H(+) = N(6)-[(R)-S(8)-aminomethyldihydrolipoyl]-L-lysyl-[glycine-cleavage complex H protein] + CO2. The glycine cleavage system catalyzes the degradation of glycine. The P protein binds the alpha-amino group of glycine through its pyridoxal phosphate cofactor; CO(2) is released and the remaining methylamine moiety is then transferred to the lipoamide cofactor of the H protein. The chain is Probable glycine dehydrogenase (decarboxylating) subunit 2 from Bacillus licheniformis (strain ATCC 14580 / DSM 13 / JCM 2505 / CCUG 7422 / NBRC 12200 / NCIMB 9375 / NCTC 10341 / NRRL NRS-1264 / Gibson 46).